We begin with the raw amino-acid sequence, 116 residues long: Somatostatin (116 aa).

The first 24 residues, 1 to 24 (MLSCRLQCALAALSIVLALGGVTG), serve as a signal peptide directing secretion. A propeptide spanning residues 25 to 88 (APSDPRLRQF…QDEMRLELQR (64 aa)) is cleaved from the precursor. Position 43 is an alanine amide (Ala-43). The segment at 62 to 99 (QTENDALEPEDLSQAAEQDEMRLELQRSANSNPAMAPR) is disordered. An intrachain disulfide couples Cys-105 to Cys-116.

It belongs to the somatostatin family. In terms of processing, C-terminal amidation of the neuronostatin peptide is required for its biological activity, including for the regulation of mean arterial pressure. Expressed in the pancreas and the spleen (at protein level).

It localises to the secreted. In terms of biological role, inhibits the secretion of pituitary hormones, including that of growth hormone/somatotropin (GH1), PRL, ACTH, luteinizing hormone (LH) and TSH. Also impairs ghrelin- and GnRH-stimulated secretion of GH1 and LH; the inhibition of ghrelin-stimulated secretion of GH1 can be further increased by neuronostatin. Functionally, may enhance low-glucose-induced glucagon release by pancreatic alpha cells. This effect may be mediated by binding to GPR107 and PKA activation. May regulate cardiac contractile function. May compromise cardiomyocyte viability. In the central nervous system, may impair memory retention and may affect hippocampal excitability. May also have anxiolytic and anorexigenic effects. May play a role in arterial pressure regulation. May inhibit basal, but not ghrelin- or GnRH-stimulated secretion of GH1 or LH, but does not affect the release of other pituitary hormones, including PRL, ACTH, FSH or TSH. Potentiates inhibitory action of somatostatin on ghrelin-stimulated secretion of GH1, but not that on GnRH-stimulated secretion of LH. In Sus scrofa (Pig), this protein is Somatostatin (SST).